A 120-amino-acid polypeptide reads, in one-letter code: Nascent polypeptide-associated complex protein (120 aa).

Residues 12–80 form the NAC-A/B domain; that stretch reads GMNPAKMKQM…VKEVPKSLEI (69 aa).

It belongs to the NAC-alpha family. As to quaternary structure, homodimer. Interacts with the ribosome. Binds ribosomal RNA.

Its function is as follows. Contacts the emerging nascent chain on the ribosome. This Methanosarcina mazei (strain ATCC BAA-159 / DSM 3647 / Goe1 / Go1 / JCM 11833 / OCM 88) (Methanosarcina frisia) protein is Nascent polypeptide-associated complex protein.